We begin with the raw amino-acid sequence, 726 residues long: Phenylalanine--tRNA ligase beta subunit (726 aa).

A tRNA-binding domain is found at 38-150 (FSSSKGLLFA…NFASLNDDAS (113 aa)). The B5 domain maps to 394 to 467 (DKKVEINFDE…RFYNYDNFKE (74 aa)). Residues aspartate 445, aspartate 451, glutamate 454, and glutamate 455 each coordinate Mg(2+).

Belongs to the phenylalanyl-tRNA synthetase beta subunit family. Type 1 subfamily. Tetramer of two alpha and two beta subunits. The cofactor is Mg(2+).

The protein resides in the cytoplasm. The enzyme catalyses tRNA(Phe) + L-phenylalanine + ATP = L-phenylalanyl-tRNA(Phe) + AMP + diphosphate + H(+). In Mycoplasmopsis synoviae (strain 53) (Mycoplasma synoviae), this protein is Phenylalanine--tRNA ligase beta subunit.